We begin with the raw amino-acid sequence, 1012 residues long: MTNLMDHTQQIVPFIRSLLMPTTGPASIPDDTLEKHTLRSETSTYNLTVGDTGSGLIVFFPGFPGSVVGAHYTLQSSGSYQFDQMLLTAQNLPVSYNYCRLVSRSLTVRSSTLPGGVYALNGTINAVTFQGSLSELTDYSYNGLMSATANINDKIGNVLVGEGVTVLSLPTSYDLSYVRLGDPIPAAGLDPKLMATCDSSDRPRVYTVTAADEYQFSSQLIPSGVKTTLFTANIDALTSLSVGGELIFSQVTIHSIEVDVTIYFIGFDGTEVTVKAVATDFGLTTGTNNLVPFNLGGPTSEITQPITSMKLEVVTYKRGGTAGDPISWTVSGTLAVTVHGGNYPGALRPVTLVAYERVAAGSVVTVAGVSNFELIPNPELAKNLVTEYGRFDPGAMNYTKLILSERDRLGIKTVWPTREYTDFREYFMEVADLNSPLKIAGAFGFKDIIRAIRKIAVPVVSTLFPPAAPLAHANREGVDYLLGDEAQAASGTARGASGKARAASGRIRQLTLAADKGYEVVANMFQVPQNPIVDGILASPGILRGAHNLDCVSKEGATLFPVVITTLEDELTPKALNSKMFAVIEGAREDLQPPSQRGSFIRTLSGHRVYGYAPDGVLPLETGRDYTVVPIDDVWDDSIMLSQDPIPPIVGNSGNLAIAYMDVFRPKVPIHVAMTGALNASEIESVSFRSTKLATAHRLGMKLAGPGDYDINTGPNWATFIKRFPHNPRGWDRLPYLNLPYLPPTAGRQFHLALAASEFKETPELEDAVRAMDAAANADPLFRSALQVFMWLEENGIVTDMANFALSDPNAHRMKNFLANAPQAGSKSQRAKYGTAGYGVEARGPTPEEAQRAKDARISKKMETMGIYFATPEWVALNGHRGPSPGQLKYWQNTREIPEPNEDYPDYVHAEKSRLASEEQILRAATSIYGAPGQAEPPQAFIDEVARVYETNHGRVPNQEQMKDLLLTAMEMKHRNPRRAPPKPKPKPNAPSQRPPGRLGRWIRTVSDEDLE.

Asp-30 is a binding site for a divalent metal cation. The Peptidase S50 domain occupies 514–755 (ADKGYEVVAN…AGRQFHLALA (242 aa)). The Nucleophile role is filled by Ser-653. The active site involves Lys-692. The segment at 972-1012 (MKHRNPRRAPPKPKPKPNAPSQRPPGRLGRWIRTVSDEDLE) is disordered. A compositionally biased stretch (basic residues) spans 975–986 (RNPRRAPPKPKP). The interval 1003–1012 (IRTVSDEDLE) is interaction with VP1 protein.

In terms of assembly, homotrimer. A central divalent metal stabilizes the VP2 trimer. Interacts with host ITGA4/ITGB1. As to quaternary structure, homodimer. Interacts (via C-terminus) with VP1 in the cytoplasm. Interacts with VP2. Specific enzymatic cleavages yield mature proteins. The capsid assembly seems to be regulated by polyprotein processing. The protease VP4 cleaves itself off the polyprotein, thus releasing pre-VP2 and VP3 within the infected cell. During capsid assembly, the C-terminus of pre-VP2 is further processed by VP4, giving rise to VP2, the external capsid protein and three small peptides that all stay closely associated with the capsid.

Its subcellular location is the virion. It localises to the host cytoplasm. Capsid protein VP2 self assembles to form an icosahedral capsid with a T=13 symmetry, about 70 nm in diameter, and consisting of 260 VP2 trimers. The capsid encapsulates the genomic dsRNA. VP2 is also involved in attachment and entry into the host cell by interacting with host ITGA4/ITGB1. Functionally, the precursor of VP2 plays an important role in capsid assembly. First, pre-VP2 and VP2 oligomers assemble to form a procapsid. Then, the pre-VP2 intermediates may be processed into VP2 proteins by proteolytic cleavage mediated by VP4 to obtain the mature virion. The final capsid is composed of pentamers and hexamers but VP2 has a natural tendency to assemble into all-pentameric structures. Therefore pre-VP2 may be required to allow formation of the hexameric structures. In terms of biological role, protease VP4 is a serine protease that cleaves the polyprotein into its final products. Pre-VP2 is first partially cleaved, and may be completely processed by VP4 upon capsid maturation. Its function is as follows. Capsid protein VP3 plays a key role in virion assembly by providing a scaffold for the capsid made of VP2. May self-assemble to form a T=4-like icosahedral inner-capsid composed of at least 180 trimers. Plays a role in genomic RNA packaging by recruiting VP1 into the capsid and interacting with the dsRNA genome segments to form a ribonucleoprotein complex. Additionally, the interaction of the VP3 C-terminal tail with VP1 removes the inherent structural blockade of the polymerase active site. Thus, VP3 can also function as a transcriptional activator. Structural peptide 1 is a small peptide derived from pre-VP2 C-terminus. It destabilizes and perforates cell membranes, suggesting a role during entry. Functionally, structural peptide 2 is a small peptide derived from pVP2 C-terminus. It is not essential for the virus viability, but viral growth is affected when missing. In terms of biological role, structural peptide 3 is a small peptide derived from pVP2 C-terminus. It is not essential for the virus viability, but viral growth is affected when missing. Its function is as follows. Structural peptide 4 is a small peptide derived from pVP2 C-terminus. It is essential for the virus viability. This Gallus gallus (Chicken) protein is Structural polyprotein.